We begin with the raw amino-acid sequence, 114 residues long: Hydrogenase maturation factor HypA (114 aa).

Histidine 2 serves as a coordination point for Ni(2+). Positions 73, 76, 89, and 92 each coordinate Zn(2+).

This sequence belongs to the HypA/HybF family.

Its function is as follows. Involved in the maturation of [NiFe] hydrogenases. Required for nickel insertion into the metal center of the hydrogenase. In Syntrophus aciditrophicus (strain SB), this protein is Hydrogenase maturation factor HypA.